A 732-amino-acid polypeptide reads, in one-letter code: Engulfment and cell motility protein 2 (732 aa).

Tyrosine 48 is subject to Phosphotyrosine. The ELMO domain occupies 323-497 (AQRDIIFELR…VVREQITRAL (175 aa)). Serine 515 carries the phosphoserine modification. Residues 565–686 (SSFRKIGNRR…LLGKDMSSEL (122 aa)) enclose the PH domain. Positions 712–719 (PEAPPPVP) match the SH3-binding motif. Tyrosine 729 bears the Phosphotyrosine mark.

Interacts directly with the SH3-domain of DOCK1 via its SH3-binding site. Probably forms a heterotrimeric complex with DOCK1 and RAC1. Interacts with ARHGEF16, DOCK4 and EPHA2; mediates activation of RAC1 by EPHA2. Interacts with ADGRB3. Interacts with AUTS2; the interaction is direct.

Its subcellular location is the cytoplasm. The protein localises to the cytosol. The protein resides in the membrane. In terms of biological role, involved in cytoskeletal rearrangements required for phagocytosis of apoptotic cells and cell motility. Acts in association with DOCK1 and CRK. Was initially proposed to be required in complex with DOCK1 to activate Rac Rho small GTPases. May enhance the guanine nucleotide exchange factor (GEF) activity of DOCK1. This is Engulfment and cell motility protein 2 (Elmo2) from Mus musculus (Mouse).